The primary structure comprises 419 residues: Tyrosine--tRNA ligase 2 (419 aa).

Residue Y34 participates in L-tyrosine binding. The 'HIGH' region motif lies at P39–H48. The L-tyrosine site is built by Y168 and Q172. The 'KMSKS' region motif lies at K230 to S234. Residue K233 coordinates ATP. The S4 RNA-binding domain maps to K352–L418.

Belongs to the class-I aminoacyl-tRNA synthetase family. TyrS type 1 subfamily. In terms of assembly, homodimer.

The protein resides in the cytoplasm. It carries out the reaction tRNA(Tyr) + L-tyrosine + ATP = L-tyrosyl-tRNA(Tyr) + AMP + diphosphate + H(+). Functionally, catalyzes the attachment of tyrosine to tRNA(Tyr) in a two-step reaction: tyrosine is first activated by ATP to form Tyr-AMP and then transferred to the acceptor end of tRNA(Tyr). The polypeptide is Tyrosine--tRNA ligase 2 (Bacillus cereus (strain ATCC 10987 / NRS 248)).